A 402-amino-acid chain; its full sequence is Type II NADH:quinone oxidoreductase (402 aa).

FAD is bound by residues 12 to 16 (GAGYA), 39 to 40 (NK), and V83. E172 is an active-site residue. Residues D302, 319–320 (AQ), and K379 each bind FAD.

The protein belongs to the NADH dehydrogenase family. FAD is required as a cofactor.

The protein resides in the cell membrane. The enzyme catalyses a quinone + NADH + H(+) = a quinol + NAD(+). Its function is as follows. Alternative, nonproton pumping NADH:quinone oxidoreductase that delivers electrons to the respiratory chain by oxidation of NADH and reduction of quinones, and contributes to the regeneration of NAD(+). In Staphylococcus aureus (strain MSSA476), this protein is Type II NADH:quinone oxidoreductase.